We begin with the raw amino-acid sequence, 1004 residues long: 2-oxoglutarate dehydrogenase E1 component (1004 aa).

The protein belongs to the alpha-ketoglutarate dehydrogenase family. As to quaternary structure, homodimer. Part of the 2-oxoglutarate dehydrogenase (OGDH) complex composed of E1 (2-oxoglutarate dehydrogenase), E2 (dihydrolipoamide succinyltransferase) and E3 (dihydrolipoamide dehydrogenase); the complex contains multiple copies of the three enzymatic components (E1, E2 and E3). Thiamine diphosphate is required as a cofactor.

It catalyses the reaction N(6)-[(R)-lipoyl]-L-lysyl-[protein] + 2-oxoglutarate + H(+) = N(6)-[(R)-S(8)-succinyldihydrolipoyl]-L-lysyl-[protein] + CO2. E1 component of the 2-oxoglutarate dehydrogenase (OGDH) complex which catalyzes the decarboxylation of 2-oxoglutarate, the first step in the conversion of 2-oxoglutarate to succinyl-CoA and CO(2). The protein is 2-oxoglutarate dehydrogenase E1 component of Brucella melitensis biotype 2 (strain ATCC 23457).